We begin with the raw amino-acid sequence, 1508 residues long: Calponin homology domain-containing protein DDB_G0272472 (1508 aa).

6 disordered regions span residues 1 to 165 (MFRN…KNDF), 197 to 290 (DSEE…NLSP), 309 to 518 (DFKS…TSIV), 531 to 561 (AANA…LFND), 680 to 706 (KEKQ…EKEL), and 1036 to 1391 (KIEK…KKSA). Low complexity predominate over residues 81 to 107 (SSSPSTSTTTTTKSSSTTTTTTTSSSS). Residues 208–222 (PIKKKQSNDLEKNIF) show a composition bias toward basic and acidic residues. 3 stretches are compositionally biased toward low complexity: residues 234 to 251 (KQST…QKQP), 263 to 290 (FGDS…NLSP), and 315 to 332 (SNNT…KSKP). Composition is skewed to basic and acidic residues over residues 337-346 (QKEEIKEVST) and 362-371 (VDEKPKERST). A compositionally biased stretch (polar residues) spans 380–391 (KTVTVKSNNSFE). Low complexity predominate over residues 395–438 (FGSTTTNDDGGDNDFSFTPATTPSSSSSTKATTTSPSSTTTTKS). A compositionally biased stretch (polar residues) spans 439 to 452 (NINIGQKSNKSVDQ). Residues 455-498 (QFLNDIFQQEEQDKKRREEEAKLKQQQKQKEKEQIKDEIDDLFK) adopt a coiled-coil conformation. Basic and acidic residues predominate over residues 465 to 498 (EQDKKRREEEAKLKQQQKQKEKEQIKDEIDDLFK). Composition is skewed to low complexity over residues 500 to 516 (SKPT…STTS) and 531 to 557 (AANA…KSTN). A compositionally biased stretch (basic and acidic residues) spans 1036–1164 (KIEKEKEERD…DQEEKEKQLK (129 aa)). Composition is skewed to low complexity over residues 1165 to 1181 (EQQQ…TTTT) and 1189 to 1206 (DSDA…SSHS). Residues 1216–1225 (SKAKGRKKPT) show a composition bias toward basic residues. The segment covering 1226-1235 (RRELTKDGNR) has biased composition (basic and acidic residues). A compositionally biased stretch (low complexity) spans 1333–1355 (PTVTQTTTTTTTPPTTPPSSSVQ). Polar residues predominate over residues 1362–1374 (RSFSGSSFMGINS). One can recognise a Calponin-homology (CH) domain in the interval 1397–1504 (MKALDVLLQW…YLSEFFKVMK (108 aa)).

The sequence is that of Calponin homology domain-containing protein DDB_G0272472 from Dictyostelium discoideum (Social amoeba).